The sequence spans 252 residues: Geranylgeranylglyceryl phosphate synthase (252 aa).

Mg(2+)-binding residues include D26 and S55. Sn-glycerol 1-phosphate is bound by residues 174–180, 205–206, and 227–228; these read YLEAGSG, GG, and GT.

It belongs to the GGGP/HepGP synthase family. Group II subfamily. As to quaternary structure, homotetramer. Homohexamer. The cofactor is Mg(2+).

It is found in the cytoplasm. The enzyme catalyses sn-glycerol 1-phosphate + (2E,6E,10E)-geranylgeranyl diphosphate = sn-3-O-(geranylgeranyl)glycerol 1-phosphate + diphosphate. It functions in the pathway membrane lipid metabolism; glycerophospholipid metabolism. In terms of biological role, prenyltransferase that catalyzes the transfer of the geranylgeranyl moiety of geranylgeranyl diphosphate (GGPP) to the C3 hydroxyl of sn-glycerol-1-phosphate (G1P). This reaction is the first ether-bond-formation step in the biosynthesis of archaeal membrane lipids. This is Geranylgeranylglyceryl phosphate synthase from Thermococcus kodakarensis (strain ATCC BAA-918 / JCM 12380 / KOD1) (Pyrococcus kodakaraensis (strain KOD1)).